Consider the following 101-residue polypeptide: Transcription and mRNA export factor SUS1 (101 aa).

The protein belongs to the ENY2 family. As to quaternary structure, component of the nuclear pore complex (NPC)-associated TREX-2 complex (transcription and export complex 2), composed of at least SUS1, SAC3, THP1, SEM1, and CDC31. TREX-2 contains 2 SUS1 chains. The TREX-2 complex interacts with the nucleoporin NUP1. Component of the 1.8 MDa SAGA transcription coactivator-HAT complex. SAGA is built of 5 distinct domains with specialized functions. Within the SAGA complex, SUS1, SGF11, SGF73 and UBP8 form an additional subcomplex of SAGA called the DUB module (deubiquitination module). Interacts directly with THP1, SAC3, SGF11, and with the RNA polymerase II.

The protein localises to the nucleus. The protein resides in the nucleoplasm. Its subcellular location is the cytoplasm. It is found in the P-body. Functionally, involved in mRNA export coupled transcription activation by association with both the TREX-2 and the SAGA complexes. At the promoters, SAGA is required for recruitment of the basal transcription machinery. It influences RNA polymerase II transcriptional activity through different activities such as TBP interaction and promoter selectivity, interaction with transcription activators, and chromatin modification through histone acetylation and deubiquitination. Within the SAGA complex, participates in a subcomplex required for deubiquitination of H2B and for the maintenance of steady-state H3 methylation levels. The TREX-2 complex functions in docking export-competent ribonucleoprotein particles (mRNPs) to the nuclear entrance of the nuclear pore complex (nuclear basket). TREX-2 participates in mRNA export and accurate chromatin positioning in the nucleus by tethering genes to the nuclear periphery. May also be involved in cytoplasmic mRNA decay by interaction with components of P-bodies. In Debaryomyces hansenii (strain ATCC 36239 / CBS 767 / BCRC 21394 / JCM 1990 / NBRC 0083 / IGC 2968) (Yeast), this protein is Transcription and mRNA export factor SUS1.